The sequence spans 249 residues: Aquaporin TIP4-3 (249 aa).

Transmembrane regions (helical) follow at residues 20-40 (GVLGELVLTFLFVFIGVGAAM) and 56-76 (TAVALGQALVVAVIATAGFHI). The short motif at 82–84 (NPA) is the NPA 1 element. Transmembrane regions (helical) follow at residues 100-122 (SSLYIAAQMLASSAACFLLRWLT), 141-161 (GVVAEAVFTFSLLFVIYATIL), and 169-189 (GAGPLLTGLLVGANSVAGAAL). The NPA 2 motif lies at 195–197 (NPA). Residues 214-234 (VYWVGPLAGGPLAVLVYECCF) form a helical membrane-spanning segment.

It belongs to the MIP/aquaporin (TC 1.A.8) family. TIP (TC 1.A.8.10) subfamily.

The protein localises to the vacuole membrane. Its function is as follows. Aquaporins facilitate the transport of water and small neutral solutes across cell membranes. The chain is Aquaporin TIP4-3 (TIP4-3) from Zea mays (Maize).